Here is a 487-residue protein sequence, read N- to C-terminus: Cysteine--tRNA ligase (487 aa).

Cysteine 29 lines the Zn(2+) pocket. The short motif at 31–41 (VTVYDYNHVGH) is the 'HIGH' region element. Cysteine 209, histidine 234, and glutamate 238 together coordinate Zn(2+). Positions 266 to 270 (KMSKS) match the 'KMSKS' region motif. Lysine 269 contacts ATP.

It belongs to the class-I aminoacyl-tRNA synthetase family. As to quaternary structure, monomer. It depends on Zn(2+) as a cofactor.

The protein resides in the cytoplasm. It catalyses the reaction tRNA(Cys) + L-cysteine + ATP = L-cysteinyl-tRNA(Cys) + AMP + diphosphate. In Sulfurihydrogenibium sp. (strain YO3AOP1), this protein is Cysteine--tRNA ligase.